Consider the following 204-residue polypeptide: Terpene cyclase ausL (204 aa).

Helical transmembrane passes span 19–39, 49–69, 75–95, 114–134, and 138–158; these read LSEMLKILAALGWSTNYLAMV, AIAVLPLCCDIAWEFTYAWIY, HWQGVVRVWFFLHTAVLAATL, LVLLYAAVIAAFAAGQLCLAL, and GALGFHWGGALCQFLSSSAAV.

The protein belongs to the paxB family.

It is found in the membrane. It functions in the pathway secondary metabolite biosynthesis; terpenoid biosynthesis. Terpene cyclase; part of the gene cluster B that mediates the biosynthesis of austinol and dehydroaustinol, two fungal meroterpenoids. The first step of the pathway is the synthesis of 3,5-dimethylorsellinic acid by the polyketide synthase ausA. 3,5-dimethylorsellinic acid is then prenylated by the polyprenyl transferase ausN. Further epoxidation by the FAD-dependent monooxygenase ausM and cyclization by the probable terpene cyclase ausL lead to the formation of protoaustinoid A. Protoaustinoid A is then oxidized to spiro-lactone preaustinoid A3 by the combined action of the FAD-binding monooxygenases ausB and ausC, and the dioxygenase ausE. Acid-catalyzed keto-rearrangement and ring contraction of the tetraketide portion of preaustinoid A3 by ausJ lead to the formation of preaustinoid A4. The aldo-keto reductase ausK, with the help of ausH, is involved in the next step by transforming preaustinoid A4 into isoaustinone which is in turn hydroxylated by the P450 monooxygenase ausI to form austinolide. Finally, the cytochrome P450 monooxygenase ausG modifies austinolide to austinol. Austinol can be further modified to dehydroaustinol which forms a diffusible complex with diorcinol that initiates conidiation. Due to genetic rearrangements of the clusters and the subsequent loss of some enzymes, the end products of the Emericella nidulans austinoid biosynthesis clusters are austinol and dehydroaustinol, even if additional enzymes, such as the O-acetyltransferase ausQ and the cytochrome P450 monooxygenase ausR are still functional. This Emericella nidulans (strain FGSC A4 / ATCC 38163 / CBS 112.46 / NRRL 194 / M139) (Aspergillus nidulans) protein is Terpene cyclase ausL.